A 353-amino-acid polypeptide reads, in one-letter code: Methionine import ATP-binding protein MetN (353 aa).

One can recognise an ABC transporter domain in the interval Leu8–Ile249. Gly42–Ser49 lines the ATP pocket.

Belongs to the ABC transporter superfamily. Methionine importer (TC 3.A.1.24) family. As to quaternary structure, the complex is composed of two ATP-binding proteins (MetN), two transmembrane proteins (MetI) and a solute-binding protein (MetQ).

It is found in the cell membrane. The enzyme catalyses L-methionine(out) + ATP + H2O = L-methionine(in) + ADP + phosphate + H(+). It catalyses the reaction D-methionine(out) + ATP + H2O = D-methionine(in) + ADP + phosphate + H(+). Part of the ABC transporter complex MetNIQ involved in methionine import. Responsible for energy coupling to the transport system. This is Methionine import ATP-binding protein MetN from Streptococcus pneumoniae serotype 4 (strain ATCC BAA-334 / TIGR4).